The following is a 120-amino-acid chain: Succinate dehydrogenase assembly factor 3, mitochondrial (120 aa).

Residues 1 to 36 (MSRILMSQLTHPQRVRLLYKTILRLHRGLPAELRAL) constitute a mitochondrion transit peptide.

The protein belongs to the complex I LYR family. SDHAF3 subfamily. As to quaternary structure, interacts with SdhB within an SdhA-SdhB subcomplex.

The protein localises to the mitochondrion matrix. Functionally, plays an essential role in the assembly of succinate dehydrogenase (SDH), an enzyme complex (also referred to as respiratory complex II) that is a component of both the tricarboxylic acid (TCA) cycle and the mitochondrial electron transport chain, and which couples the oxidation of succinate to fumarate with the reduction of ubiquinone (coenzyme Q) to ubiquinol. Promotes maturation of the iron-sulfur protein subunit SdhB of the SDH catalytic dimer, protecting it from the deleterious effects of oxidants. The polypeptide is Succinate dehydrogenase assembly factor 3, mitochondrial (Drosophila melanogaster (Fruit fly)).